A 117-amino-acid polypeptide reads, in one-letter code: Large ribosomal subunit protein bL20 (117 aa).

It belongs to the bacterial ribosomal protein bL20 family.

In terms of biological role, binds directly to 23S ribosomal RNA and is necessary for the in vitro assembly process of the 50S ribosomal subunit. It is not involved in the protein synthesizing functions of that subunit. The sequence is that of Large ribosomal subunit protein bL20 from Rickettsia felis (strain ATCC VR-1525 / URRWXCal2) (Rickettsia azadi).